A 116-amino-acid chain; its full sequence is Putative anti-sigma factor antagonist BtrV (116 aa).

The STAS domain occupies 1–110 (MKLTMDKIDG…NSREAAAAAF (110 aa)). S55 bears the Phosphoserine; by BtrW mark.

It belongs to the anti-sigma-factor antagonist family. As to quaternary structure, interacts with BtrW. Phosphorylated by BtrW. Dephosphorylated by BtrU.

Its function is as follows. Possible positive regulator of sigma-B activity. Non-phosphorylated BtrV binds to BtrW, preventing its association with an unknown partner(s) that might be sigma-B. When phosphorylated, releases BtrW, which is then free to complex with and inactivate its partner. Involved in type III secretion system (T3SS). The polypeptide is Putative anti-sigma factor antagonist BtrV (btrV) (Bordetella bronchiseptica (strain ATCC BAA-588 / NCTC 13252 / RB50) (Alcaligenes bronchisepticus)).